Here is a 303-residue protein sequence, read N- to C-terminus: Bifunctional protein FolD (303 aa).

NADP(+) contacts are provided by residues glycine 169 to glycine 171, threonine 196, and valine 237.

This sequence belongs to the tetrahydrofolate dehydrogenase/cyclohydrolase family. As to quaternary structure, homodimer.

It carries out the reaction (6R)-5,10-methylene-5,6,7,8-tetrahydrofolate + NADP(+) = (6R)-5,10-methenyltetrahydrofolate + NADPH. The enzyme catalyses (6R)-5,10-methenyltetrahydrofolate + H2O = (6R)-10-formyltetrahydrofolate + H(+). The protein operates within one-carbon metabolism; tetrahydrofolate interconversion. Catalyzes the oxidation of 5,10-methylenetetrahydrofolate to 5,10-methenyltetrahydrofolate and then the hydrolysis of 5,10-methenyltetrahydrofolate to 10-formyltetrahydrofolate. The sequence is that of Bifunctional protein FolD from Micrococcus luteus (strain ATCC 4698 / DSM 20030 / JCM 1464 / CCM 169 / CCUG 5858 / IAM 1056 / NBRC 3333 / NCIMB 9278 / NCTC 2665 / VKM Ac-2230) (Micrococcus lysodeikticus).